A 461-amino-acid polypeptide reads, in one-letter code: tRNA-2-methylthio-N(6)-dimethylallyladenosine synthase (461 aa).

The MTTase N-terminal domain occupies 25–143 (PTYSIITHGC…LPYLIDRHLS (119 aa)). The [4Fe-4S] cluster site is built by Cys34, Cys70, Cys104, Cys179, Cys183, and Cys186. The region spanning 165 to 395 (RDNEYVGYVN…LDVAYPIFYE (231 aa)) is the Radical SAM core domain. Residues 398 to 461 (KSYLGTIQEV…SFALTGEMVD (64 aa)) form the TRAM domain.

Belongs to the methylthiotransferase family. MiaB subfamily. In terms of assembly, monomer. The cofactor is [4Fe-4S] cluster.

The protein localises to the cytoplasm. It catalyses the reaction N(6)-dimethylallyladenosine(37) in tRNA + (sulfur carrier)-SH + AH2 + 2 S-adenosyl-L-methionine = 2-methylsulfanyl-N(6)-dimethylallyladenosine(37) in tRNA + (sulfur carrier)-H + 5'-deoxyadenosine + L-methionine + A + S-adenosyl-L-homocysteine + 2 H(+). Catalyzes the methylthiolation of N6-(dimethylallyl)adenosine (i(6)A), leading to the formation of 2-methylthio-N6-(dimethylallyl)adenosine (ms(2)i(6)A) at position 37 in tRNAs that read codons beginning with uridine. This Finegoldia magna (strain ATCC 29328 / DSM 20472 / WAL 2508) (Peptostreptococcus magnus) protein is tRNA-2-methylthio-N(6)-dimethylallyladenosine synthase.